Here is a 1376-residue protein sequence, read N- to C-terminus: DNA-directed RNA polymerase subunit beta'' (1376 aa).

4 residues coordinate Zn(2+): C221, C290, C297, and C300. Positions P895 to P919 are disordered.

It belongs to the RNA polymerase beta' chain family. RpoC2 subfamily. In plastids the minimal PEP RNA polymerase catalytic core is composed of four subunits: alpha, beta, beta', and beta''. When a (nuclear-encoded) sigma factor is associated with the core the holoenzyme is formed, which can initiate transcription. The cofactor is Zn(2+).

The protein resides in the plastid. Its subcellular location is the chloroplast. It carries out the reaction RNA(n) + a ribonucleoside 5'-triphosphate = RNA(n+1) + diphosphate. DNA-dependent RNA polymerase catalyzes the transcription of DNA into RNA using the four ribonucleoside triphosphates as substrates. The protein is DNA-directed RNA polymerase subunit beta'' of Pelargonium hortorum (Common geranium).